Consider the following 237-residue polypeptide: Proteasome subunit beta type-1-B (237 aa).

This sequence belongs to the peptidase T1B family. As to quaternary structure, the 26S proteasome consists of a 20S proteasome core and two 19S regulatory subunits. The 20S proteasome core is composed of 28 subunits that are arranged in four stacked rings, resulting in a barrel-shaped structure. The two end rings are each formed by seven alpha subunits, and the two central rings are each formed by seven beta subunits. The catalytic chamber with the active sites is on the inside of the barrel.

It is found in the cytoplasm. The protein localises to the nucleus. In terms of biological role, non-catalytic component of the proteasome, a multicatalytic proteinase complex which is characterized by its ability to cleave peptides with Arg, Phe, Tyr, Leu, and Glu adjacent to the leaving group at neutral or slightly basic pH. The proteasome has an ATP-dependent proteolytic activity. The polypeptide is Proteasome subunit beta type-1-B (psmb1-B) (Carassius auratus (Goldfish)).